Reading from the N-terminus, the 325-residue chain is Succinylglutamate desuccinylase (325 aa).

Zn(2+)-binding residues include H51, E54, and H148. E211 is an active-site residue.

Belongs to the AspA/AstE family. Succinylglutamate desuccinylase subfamily. Requires Zn(2+) as cofactor.

The enzyme catalyses N-succinyl-L-glutamate + H2O = L-glutamate + succinate. The protein operates within amino-acid degradation; L-arginine degradation via AST pathway; L-glutamate and succinate from L-arginine: step 5/5. Transforms N(2)-succinylglutamate into succinate and glutamate. This chain is Succinylglutamate desuccinylase, found in Photorhabdus laumondii subsp. laumondii (strain DSM 15139 / CIP 105565 / TT01) (Photorhabdus luminescens subsp. laumondii).